A 112-amino-acid polypeptide reads, in one-letter code: Type III inner-rod protein PscI (112 aa).

This sequence belongs to the YscI/HrpB family. As to quaternary structure, homomultimer (through its C-terminal region).

Functionally, component of the type III secretion (T3S) injectisome that translocates effector toxins into host cells, facilitating the establishment and dissemination of infection. Polymerizes into flexible and regularly twisted fibrils and plays an essential role in needle assembly. In Pseudomonas aeruginosa (strain ATCC 15692 / DSM 22644 / CIP 104116 / JCM 14847 / LMG 12228 / 1C / PRS 101 / PAO1), this protein is Type III inner-rod protein PscI (pscI).